A 202-amino-acid polypeptide reads, in one-letter code: MSQLDSRSASARIRVFDQQRAEAAVRELLYAIGEDPDRDGLVATPSRVARSYREMFAGLYTDPDSVLNTMFDEDHDELVLVKEIPMYSTCEHHLVAFHGVAHVGYIPGDDGRVTGLSKIARLVDLYAKRPQVQERLTSQIADALMKKLDPRGVIVVIEAEHLCMAMRGVRKPGSVTTTSAVRGLFKTNAASRAEALDLILRK.

Zn(2+)-binding residues include cysteine 90, histidine 93, and cysteine 163.

This sequence belongs to the GTP cyclohydrolase I family. As to quaternary structure, toroid-shaped homodecamer, composed of two pentamers of five dimers.

It catalyses the reaction GTP + H2O = 7,8-dihydroneopterin 3'-triphosphate + formate + H(+). It participates in cofactor biosynthesis; 7,8-dihydroneopterin triphosphate biosynthesis; 7,8-dihydroneopterin triphosphate from GTP: step 1/1. The protein is GTP cyclohydrolase 1 (folE) of Mycobacterium bovis (strain ATCC BAA-935 / AF2122/97).